The chain runs to 211 residues: Pyridoxine/pyridoxamine 5'-phosphate oxidase (211 aa).

Substrate contacts are provided by residues 7 to 10 (RREY) and K65. Residues 60 to 65 (RIVLLK), 75 to 76 (FT), K82, and Q104 contribute to the FMN site. Residues Y122, R126, and S130 each coordinate substrate. FMN contacts are provided by residues 139 to 140 (QS) and W184. Residue 190–192 (RLH) coordinates substrate. R194 lines the FMN pocket.

This sequence belongs to the pyridoxamine 5'-phosphate oxidase family. In terms of assembly, homodimer. It depends on FMN as a cofactor.

The catalysed reaction is pyridoxamine 5'-phosphate + O2 + H2O = pyridoxal 5'-phosphate + H2O2 + NH4(+). It catalyses the reaction pyridoxine 5'-phosphate + O2 = pyridoxal 5'-phosphate + H2O2. The protein operates within cofactor metabolism; pyridoxal 5'-phosphate salvage; pyridoxal 5'-phosphate from pyridoxamine 5'-phosphate: step 1/1. It functions in the pathway cofactor metabolism; pyridoxal 5'-phosphate salvage; pyridoxal 5'-phosphate from pyridoxine 5'-phosphate: step 1/1. Functionally, catalyzes the oxidation of either pyridoxine 5'-phosphate (PNP) or pyridoxamine 5'-phosphate (PMP) into pyridoxal 5'-phosphate (PLP). The protein is Pyridoxine/pyridoxamine 5'-phosphate oxidase of Teredinibacter turnerae (strain ATCC 39867 / T7901).